A 97-amino-acid chain; its full sequence is ESAT-6-like protein EsxA (97 aa).

This sequence belongs to the WXG100 family. ESAT-6 subfamily. As to quaternary structure, forms a tight 1:1 complex with EsxB. Forms a complex with EccC and EsxB, probably wholly mediated by EsxB.

It localises to the secreted. May help regulate assembly and function of the type VII secretion system (T7SS). EsxA disassembles pre-formed EccC-EsxB multimers, possibly by making EccC-EsxA-EsxB trimers instead of EccC-EsxB-EsxB-EccC tetramers. This Thermomonospora curvata (strain ATCC 19995 / DSM 43183 / JCM 3096 / KCTC 9072 / NBRC 15933 / NCIMB 10081 / Henssen B9) protein is ESAT-6-like protein EsxA.